Reading from the N-terminus, the 516-residue chain is MNSFPWLTIIVVFPILTGSLIFLLPHRGNKVMKWYTLCICILELLLTTYTFCYHFQLDDPLTQLTENYKWIHFFDFYWRLGIDGLSIGPILLTGFITTLATLAAWPVTRDAQLFHFLMLAMYSGQIGSFSSRDLLLFFLMWEFELIPVYLLLSMWGGKKRLYSATKFILYTAGGSIFLLIGVLGIGLYGSNEPTLNFETLANQSYPVALEVIFYVGFLIAFAVKLPIIPLHTWLPDTHGEAHYSTCMLLAGILLKMGAYGLVRINMELLPHAHCLFSPGLIIVGAIQIIYAASTSPGQLNLKKRIAYSSISHMGFIIIGIGSLSDTGLNGAILQIISHGFIGAALFFLAGTSYDRIRLLYLDEMGGMAIPLPKLFTMLSILSMSSLALPGLSGFVAELLVFFGIITSQKYLLMPKILIAFLMAIGMILTPIYSLSMLRQMFYGYKLFNVPNYYFFDSGPRELFVSISLLLPIIGIGIYPDFVLSLSVEKVEAIISHFFFFDSFQEKRINGKRILLV.

14 consecutive transmembrane segments (helical) span residues 4 to 24 (FPWL…IFLL), 37 to 57 (LCIC…HFQL), 87 to 107 (IGPI…AWPV), 111 to 131 (AQLF…SFSS), 134 to 154 (LLLF…LLSM), 167 to 187 (FILY…GIGL), 208 to 228 (ALEV…LPII), 242 to 262 (HYST…YGLV), 272 to 292 (AHCL…IYAA), 305 to 325 (IAYS…SLSD), 330 to 350 (GAIL…FLAG), 386 to 406 (LALP…GIIT), 416 to 436 (ILIA…SLSM), and 462 to 482 (LFVS…PDFV).

It belongs to the complex I subunit 4 family.

It is found in the plastid. The protein localises to the chloroplast thylakoid membrane. It carries out the reaction a plastoquinone + NADH + (n+1) H(+)(in) = a plastoquinol + NAD(+) + n H(+)(out). The enzyme catalyses a plastoquinone + NADPH + (n+1) H(+)(in) = a plastoquinol + NADP(+) + n H(+)(out). This chain is NAD(P)H-quinone oxidoreductase chain 4, chloroplastic, found in Oenothera argillicola (Appalachian evening primrose).